Consider the following 169-residue polypeptide: Myosin regulatory light chain 11 (169 aa).

A2 carries the post-translational modification N,N,N-trimethylalanine. 2 positions are modified to phosphoserine: S15 and S16. Phosphothreonine is present on residues T25 and T35. The 36-residue stretch at 25 to 60 folds into the EF-hand 1 domain; it reads TQIQEFKEAFTVIDQNRDGIIDKEDLRDTFAAMGRL. Ca(2+) is bound by residues D38, N40, D42, and D49. S75 bears the Phosphoserine mark. EF-hand domains are found at residues 95–130 and 131–166; these read DPED…QCDR and FSQE…GDAK. Residue T101 is modified to Phosphothreonine.

As to quaternary structure, myosin is a hexamer of 2 heavy chains and 4 light chains.

Functionally, myosin regulatory subunit that plays an essential role to maintain muscle integrity during early development. Plays a role in regulation of muscle contraction. The chain is Myosin regulatory light chain 11 (Myl11) from Mus musculus (Mouse).